A 528-amino-acid chain; its full sequence is Probable histone-arginine methyltransferase 1.4 (528 aa).

At M1 the chain carries N-acetylmethionine. The region spanning 144–459 (EAASAKMYFH…QSYTINLTLS (316 aa)) is the SAM-dependent MTase PRMT-type domain. Residues Q161, R170, G194, E216, and E246 each coordinate S-adenosyl-L-methionine. Catalysis depends on residues E260 and E269. T274 is a binding site for S-adenosyl-L-methionine.

The protein belongs to the class I-like SAM-binding methyltransferase superfamily. Protein arginine N-methyltransferase family.

It is found in the nucleus. It localises to the cytoplasm. It catalyses the reaction L-arginyl-[protein] + 2 S-adenosyl-L-methionine = N(omega),N(omega)-dimethyl-L-arginyl-[protein] + 2 S-adenosyl-L-homocysteine + 2 H(+). In terms of biological role, methylates (mono- and asymmetric dimethylation) the guanidino nitrogens of arginyl residues in several proteins involved in DNA packaging, transcription regulation, and mRNA stability. Recruited to promoters upon gene activation, methylates histone H3 and activates transcription via chromatin remodeling. In Arabidopsis thaliana (Mouse-ear cress), this protein is Probable histone-arginine methyltransferase 1.4 (PRMT14).